Consider the following 739-residue polypeptide: Protein kinase C (739 aa).

Positions 1-117 (MFTGKLQIKV…SETAVQDLWV (117 aa)) constitute a C2 domain. 2 Phorbol-ester/DAG-type zinc fingers span residues 176–226 (GHKF…VSKC) and 251–301 (PHRF…ANTC). The Protein kinase domain maps to 408 to 665 (FNFIKVLGKG…ENEIRKHPFF (258 aa)). Residues 414-422 (LGKGSFGKV) and Lys437 each bind ATP. Asp532 (proton acceptor) is an active-site residue. Positions 666–737 (AKLDWKELEK…VNPKFGPERK (72 aa)) constitute an AGC-kinase C-terminal domain.

It belongs to the protein kinase superfamily. AGC Ser/Thr protein kinase family. PKC subfamily.

It catalyses the reaction L-seryl-[protein] + ATP = O-phospho-L-seryl-[protein] + ADP + H(+). The catalysed reaction is L-threonyl-[protein] + ATP = O-phospho-L-threonyl-[protein] + ADP + H(+). Functionally, PKC is activated by diacylglycerol which in turn phosphorylates a range of cellular proteins. PKC also serves as the receptor for phorbol esters, a class of tumor promoters. The protein is Protein kinase C (Pkc98E) of Drosophila melanogaster (Fruit fly).